Here is a 308-residue protein sequence, read N- to C-terminus: Protoheme IX farnesyltransferase (308 aa).

Transmembrane regions (helical) follow at residues 20–40 (VLAY…VTAI), 53–73 (PLLI…ANTF), 102–122 (NALV…WWTT), 124–144 (LLSG…YTLL), 149–169 (TSQN…IGWS), 170–190 (AITD…FFWT), 227–249 (LIYT…WLYM), 254–276 (VAGA…GEPV), and 288–308 (YLAV…PTLF).

This sequence belongs to the UbiA prenyltransferase family. Protoheme IX farnesyltransferase subfamily.

Its subcellular location is the cell membrane. It carries out the reaction heme b + (2E,6E)-farnesyl diphosphate + H2O = Fe(II)-heme o + diphosphate. Its pathway is porphyrin-containing compound metabolism; heme O biosynthesis; heme O from protoheme: step 1/1. Its function is as follows. Converts heme B (protoheme IX) to heme O by substitution of the vinyl group on carbon 2 of heme B porphyrin ring with a hydroxyethyl farnesyl side group. This chain is Protoheme IX farnesyltransferase, found in Mycobacterium leprae (strain TN).